The sequence spans 640 residues: Protection of telomeres protein 1 (640 aa).

This sequence belongs to the telombin family. Homodimer or homooligomer. Component of the shelterin complex (telosome) composed of TERF1, TERF2, TINF2, TERF2IP, ACD and POT1. Binds single-stranded telomeric DNA as a monomer. Associated component of the telomerase holoenzyme complex. Found in a complex with TERF1, TINF2 and TNKS1. Interacts with TNKS1. Forms heterodimers with ACD. Identified in a complex with ACD and single-stranded telomeric DNA.

The protein resides in the nucleus. It is found in the chromosome. It localises to the telomere. Functionally, component of the telomerase ribonucleoprotein (RNP) complex that is essential for the replication of chromosome termini. Is a component of the double-stranded telomeric DNA-binding TRF1 complex which is involved in the regulation of telomere length by cis-inhibition of telomerase. Also acts as a single-stranded telomeric DNA-binding protein and thus may act as a downstream effector of the TRF1 complex and may transduce information about telomere maintenance and/or length to the telomere terminus. Component of the shelterin complex (telosome) that is involved in the regulation of telomere length and protection. Shelterin associates with arrays of double-stranded TTAGGG repeats added by telomerase and protects chromosome ends; without its protective activity, telomeres are no longer hidden from the DNA damage surveillance and chromosome ends are inappropriately processed by DNA repair pathways. Binds to two or more telomeric single-stranded 5'-TTAGGG-3' repeats (G-strand) and with high specificity to a minimal telomeric single-stranded 5'-TAGGGTTAG-3' sequence. Binds telomeric single-stranded sequences internally or at proximity of a 3'-end. Its activity is TERT dependent but it does not increase TERT activity. The chain is Protection of telomeres protein 1 (Pot1) from Mus musculus (Mouse).